We begin with the raw amino-acid sequence, 288 residues long: Syntaxin-1A (288 aa).

At 1 to 265 (MKDRTQELRT…KYQSKARRKK (265 aa)) the chain is on the cytoplasmic side. Phosphoserine is present on residues Ser14, Ser64, and Ser95. Residues 68–109 (DEKTKEELEELMSDIKKTANKVRSKLKSIEQSIEQEEGLNRS) adopt a coiled-coil conformation. The residue at position 188 (Ser188) is a Phosphoserine; by DAPK1. One can recognise a t-SNARE coiled-coil homology domain in the interval 192 to 254 (LSEIETRHSE…ERAVSDTKKA (63 aa)). Residues Lys252, Lys253, and Lys256 each participate in a glycyl lysine isopeptide (Lys-Gly) (interchain with G-Cter in SUMO) cross-link. A helical; Anchor for type IV membrane protein membrane pass occupies residues 266–286 (IMIIICCVILGIVIASTVGGI). Residues 287–288 (FA) lie on the Extracellular side of the membrane.

The protein belongs to the syntaxin family. As to quaternary structure, part of the SNARE core complex containing SNAP25, VAMP2 and STX1A; this complex constitutes the basic catalytic machinery of the complex neurotransmitter release apparatus. The SNARE complex interacts with CPLX1. Interacts with STXBP1. The interaction with STXBP1 promotes assembly of the SNARE complex. Interacts (via C-terminus) with KCNB1 (via C-terminus); the interaction increases in a calcium-dependent manner and induces a pore-independent enhancement of exocytosis in neuroendocrine cells, chromaffin cells, pancreatic beta cells and from the soma of dorsal root ganglia (DRG) neurons. Interacts with SYTL4. Interacts with STXBP6. Interacts with PLCL1 (via C2 domain). Interacts with OTOF. Interacts with LGI3. Interacts (via the H3 domain) with SLC6A4 (via the N-terminus); this interaction regulates SLC4A6 channel conductance in thalamocortical neurons. Interacts with SYT6 and SYT8; the interaction is Ca(2+)-dependent. Interacts with VAMP8. Interacts with SNAP23. Interacts with VAPA and SYBU. Interacts with PRRT2. Interacts with SEPT8. Interacts with STXBP5L. Interacts with synaptotagmin-1/SYT1. Interacts with SEPTIN5; in the cerebellar cortex. Interacts with SEPTIN4; in the striatum. In terms of processing, phosphorylated by CK2. Phosphorylation at Ser-188 by DAPK1 significantly decreases its interaction with STXBP1. Sumoylated, sumoylation is required for regulation of synaptic vesicle endocytosis. Highly expressed in embryonic spinal cord and ganglia and in adult cerebellum and cerebral cortex. In terms of tissue distribution, expressed in heart, liver, fat, skeletal muscle, kidney and brain.

The protein localises to the cytoplasmic vesicle. It localises to the secretory vesicle. It is found in the synaptic vesicle membrane. The protein resides in the synapse. Its subcellular location is the synaptosome. The protein localises to the cell membrane. It localises to the secreted. Its function is as follows. Plays an essential role in hormone and neurotransmitter calcium-dependent exocytosis and endocytosis. Part of the SNARE (Soluble NSF Attachment Receptor) complex composed of SNAP25, STX1A and VAMP2 which mediates the fusion of synaptic vesicles with the presynaptic plasma membrane. STX1A and SNAP25 are localized on the plasma membrane while VAMP2 resides in synaptic vesicles. The pairing of the three SNAREs from the N-terminal SNARE motifs to the C-terminal anchors leads to the formation of the SNARE complex, which brings membranes into close proximity and results in final fusion. Participates in the calcium-dependent regulation of acrosomal exocytosis in sperm. Also plays an important role in the exocytosis of hormones such as insulin or glucagon-like peptide 1 (GLP-1). This chain is Syntaxin-1A (STX1A), found in Homo sapiens (Human).